The chain runs to 81 residues: uncharacterized protein (81 aa).

2 helical membrane passes run 27 to 47 (ASLLFFGQTILFVFLSYLNLT) and 54 to 74 (IFGAYLTIFFAGFTYYSIFIM).

The protein resides in the cell membrane. This is an uncharacterized protein from Bacillus subtilis (strain 168).